The sequence spans 492 residues: Argininosuccinate lyase (492 aa).

This sequence belongs to the lyase 1 family. Argininosuccinate lyase subfamily.

Its subcellular location is the cytoplasm. It carries out the reaction 2-(N(omega)-L-arginino)succinate = fumarate + L-arginine. It functions in the pathway amino-acid biosynthesis; L-arginine biosynthesis; L-arginine from L-ornithine and carbamoyl phosphate: step 3/3. This is Argininosuccinate lyase from Methanocorpusculum labreanum (strain ATCC 43576 / DSM 4855 / Z).